The sequence spans 470 residues: Ribulose bisphosphate carboxylase large chain (470 aa).

Residues asparagine 115 and threonine 165 each contribute to the substrate site. The Proton acceptor role is filled by lysine 167. Position 169 (lysine 169) interacts with substrate. The Mg(2+) site is built by lysine 193, aspartate 195, and glutamate 196. N6-carboxylysine is present on lysine 193. Histidine 286 serves as the catalytic Proton acceptor. 3 residues coordinate substrate: arginine 287, histidine 319, and serine 371.

The protein belongs to the RuBisCO large chain family. Type I subfamily. In terms of assembly, heterohexadecamer of 8 large chains and 8 small chains. Requires Mg(2+) as cofactor.

It is found in the carboxysome. The enzyme catalyses 2 (2R)-3-phosphoglycerate + 2 H(+) = D-ribulose 1,5-bisphosphate + CO2 + H2O. It carries out the reaction D-ribulose 1,5-bisphosphate + O2 = 2-phosphoglycolate + (2R)-3-phosphoglycerate + 2 H(+). RuBisCO catalyzes two reactions: the carboxylation of D-ribulose 1,5-bisphosphate, the primary event in carbon dioxide fixation, as well as the oxidative fragmentation of the pentose substrate in the photorespiration process. Both reactions occur simultaneously and in competition at the same active site. In Prochlorococcus marinus (strain NATL1A), this protein is Ribulose bisphosphate carboxylase large chain.